We begin with the raw amino-acid sequence, 425 residues long: Fe(2+) transport protein 3, chloroplastic (425 aa).

A helical membrane pass occupies residues 65–85; sequence FVAIASILLAGAAGVTIPLIG. Topologically, residues 86–97 are cytoplasmic; the sequence is RNRRFLQTDGNL. A helical membrane pass occupies residues 98 to 118; that stretch reads FVTAKAFAAGVILATGFVHML. The Lumenal portion of the chain corresponds to 119 to 137; sequence AGGTEALKNPCLPDFPWSK. The chain crosses the membrane as a helical span at residues 138–158; it reads FPFPGFFAMIAALITLFVDFM. Residues 159 to 269 lie on the Cytoplasmic side of the membrane; the sequence is GTQYYERKQE…GLDAVNGARH (111 aa). The chain crosses the membrane as a helical span at residues 270–290; sequence IVVSQVLELGIVSHSIIIGLS. Over 291–301 the chain is Lumenal; sequence LGVSQSPCTIR. A helical membrane pass occupies residues 302–322; the sequence is PLIAALSFHQFFEGFALGGCI. The Cytoplasmic segment spans residues 323–333; it reads SQAQFRNKSAT. Residues 334–354 form a helical membrane-spanning segment; it reads IMACFFALTTPIGIGIGTAVA. Residues 355–369 lie on the Lumenal side of the membrane; that stretch reads SSFNSHSVGALVTEG. Residues 370-390 form a helical membrane-spanning segment; sequence ILDSLSAGILVYMALVDLIAA. The Cytoplasmic portion of the chain corresponds to 391 to 404; that stretch reads DFLSTKMRCNFRLQ. Residues 405 to 425 form a helical membrane-spanning segment; the sequence is IVSYVMLFLGAGLMSSLAIWA.

It belongs to the ZIP transporter (TC 2.A.5) family.

It is found in the plastid. It localises to the chloroplast thylakoid membrane. Functionally, may play a role in the transport of iron in the plastids. The polypeptide is Fe(2+) transport protein 3, chloroplastic (IRT3) (Arabidopsis thaliana (Mouse-ear cress)).